The primary structure comprises 289 residues: Ribosomal RNA small subunit methyltransferase A (289 aa).

S-adenosyl-L-methionine-binding residues include Asn-28, Leu-30, Gly-55, Glu-76, Asp-101, and Asn-125.

This sequence belongs to the class I-like SAM-binding methyltransferase superfamily. rRNA adenine N(6)-methyltransferase family. RsmA subfamily.

It localises to the cytoplasm. The enzyme catalyses adenosine(1518)/adenosine(1519) in 16S rRNA + 4 S-adenosyl-L-methionine = N(6)-dimethyladenosine(1518)/N(6)-dimethyladenosine(1519) in 16S rRNA + 4 S-adenosyl-L-homocysteine + 4 H(+). In terms of biological role, specifically dimethylates two adjacent adenosines (A1518 and A1519) in the loop of a conserved hairpin near the 3'-end of 16S rRNA in the 30S particle. May play a critical role in biogenesis of 30S subunits. The chain is Ribosomal RNA small subunit methyltransferase A from Clostridioides difficile (strain 630) (Peptoclostridium difficile).